A 391-amino-acid chain; its full sequence is ATPase GET3C (391 aa).

The transit peptide at 1–50 (MAALLLLNRVSRSTSSISLHRVAGTLGFNSFNAQIHGDRISGTLFRVRSL) directs the protein to the mitochondrion. Residue 77-84 (KGGVGKTS) participates in ATP binding. Asp106 is an active-site residue. Residue Asn328 coordinates ATP.

This sequence belongs to the arsA ATPase family.

It is found in the mitochondrion matrix. It carries out the reaction ATP + H2O = ADP + phosphate + H(+). The protein is ATPase GET3C of Arabidopsis thaliana (Mouse-ear cress).